A 359-amino-acid chain; its full sequence is Probable mannitol dehydrogenase (359 aa).

7 residues coordinate Zn(2+): Cys48, His70, Cys101, Cys104, Cys107, Cys115, and Cys164.

Belongs to the zinc-containing alcohol dehydrogenase family. It depends on Zn(2+) as a cofactor.

The enzyme catalyses D-mannitol + NAD(+) = D-mannose + NADH + H(+). In terms of biological role, oxidizes mannitol to mannose. Provides the initial step by which translocated mannitol is committed to central metabolism and, by regulating mannitol pool size, is important in regulating salt tolerance at the cellular level. The polypeptide is Probable mannitol dehydrogenase (CAD) (Fragaria ananassa (Strawberry)).